The following is a 402-amino-acid chain: MNVLVINAGSSSCKYQLINMESEGVLCAGLVERIGEATGKLAHKIAPDTDSEEKIVLEQPFPNHVEAMKKVVELITDPEKGVIKDKSEIYAIGHRVLLGGEEIKESVKIDEWAKGVIRDYIPLGPLHNPANLAGIEVAEELFPGVPSVGVFDTEFHQTMPAKAYLYPLPLELYEEMKIRRYGFHGTSHRYVTKKTAEFLGKPLDEVNIITCHLGNGCSMAAVKNGKCVDTTMGITPLEGLMMGTRCGDIDPAIVPFLMEKKGLTTAEADTLMNKQSGLKGVCGMNDMRDIHAAVEKGDEKAKLALDMFVYRIKKYIGAFYAALGRVDAVVFTAGIGENDDIVRAEVCENMDVFGIALDAEKNKIRSGEPRNIAAENSKVAVLVVPTNEELEIAQAAVNVLKG.

Residue Asn7 coordinates Mg(2+). Lys14 lines the ATP pocket. Residue Arg95 participates in substrate binding. The active-site Proton donor/acceptor is Asp152. ATP contacts are provided by residues 212 to 216 (HLGNG), 286 to 288 (DMR), and 334 to 338 (GIGEN). Glu388 is a binding site for Mg(2+).

This sequence belongs to the acetokinase family. Homodimer. It depends on Mg(2+) as a cofactor. The cofactor is Mn(2+).

The protein resides in the cytoplasm. It carries out the reaction acetate + ATP = acetyl phosphate + ADP. Its pathway is metabolic intermediate biosynthesis; acetyl-CoA biosynthesis; acetyl-CoA from acetate: step 1/2. In terms of biological role, catalyzes the formation of acetyl phosphate from acetate and ATP. Can also catalyze the reverse reaction. This chain is Acetate kinase, found in Oleidesulfovibrio alaskensis (strain ATCC BAA-1058 / DSM 17464 / G20) (Desulfovibrio alaskensis).